The chain runs to 946 residues: Increased sodium tolerance protein 2 (946 aa).

Topologically, residues 1–121 are cytoplasmic; the sequence is MSQTITSLDP…SNLTNNPKQS (121 aa). The helical transmembrane segment at 122 to 142 threads the bilayer; that stretch reads LYFAFLQNYIKWLIPFSFFGL. Residues 143–153 are Extracellular-facing; that stretch reads SIRFLSNFTYE. Residues 154-174 form a helical membrane-spanning segment; the sequence is FNSTYSLFAILWTLSFTAFWL. Residues 175-217 lie on the Cytoplasmic side of the membrane; it reads YKYEPFWSDRLSKYSSFSTIEFLQDKQKAQKKASSVIMLKKCC. Residues 218–238 traverse the membrane as a helical segment; sequence FIPVALLFGAILLSFQLYCFA. Residues 239–253 lie on the Extracellular side of the membrane; sequence LEIFIKQIYNGPMIS. Residues 254 to 274 form a helical membrane-spanning segment; it reads ILSFLPTILICTFTPVLTVIY. At 275 to 302 the chain is on the cytoplasmic side; sequence NKYFVEPMTKWENHSSVVNAKKSKEAKN. A helical membrane pass occupies residues 303–323; sequence FVIIFLSSYVPLLITLFLYLP. Residues 324 to 447 lie on the Extracellular side of the membrane; that stretch reads MGHLLTAEIR…DANFKKLLLQ (124 aa). A helical transmembrane segment spans residues 448 to 468; the sequence is FGYLVMFSTIWPLAPFICLIV. Residues 469–505 are Cytoplasmic-facing; it reads NLIVYQVDLRKAVLYSKPEYFPFPIYDKPSSVSNTQK. A helical membrane pass occupies residues 506-526; the sequence is LTVGLWNSVLVMFSILGCVIT. Residues 527–563 lie on the Extracellular side of the membrane; it reads ATLTYMYQSCNIPGVGAHTSIHTNKAWYLANPINHSW. Residues 564–584 form a helical membrane-spanning segment; the sequence is INIVLYAVFIEHVSVAIFFLF. At 585–946 the chain is on the cytoplasmic side; the sequence is SSILKSSHDD…GLLHKLKKKL (362 aa). Disordered stretches follow at residues 617 to 638 and 665 to 718; these read EKIP…RKGS and THAN…TEKR. A compositionally biased stretch (basic and acidic residues) spans 628 to 638; it reads NEKELVQRKGS. Serine 638 carries the phosphoserine modification. The segment covering 671–689 has biased composition (low complexity); it reads PSSLSSASSPSLSSSSSSS. Threonine 701 is modified (phosphothreonine). 2 positions are modified to phosphoserine: serine 704 and serine 720. Residue threonine 726 is modified to Phosphothreonine. A Phosphoserine modification is found at serine 729. A Phosphotyrosine modification is found at tyrosine 730. Position 757 is a phosphoserine (serine 757). Positions 759–784 are disordered; sequence RDAKSSAESSNATNNNTLGTESKLLP. The segment covering 764-775 has biased composition (low complexity); the sequence is SAESSNATNNNT. Residues serine 793, serine 844, and serine 847 each carry the phosphoserine modification. The disordered stretch occupies residues 846 to 946; sequence VSVATEQTKK…GLLHKLKKKL (101 aa). At threonine 850 the chain carries Phosphothreonine. Over residues 859 to 868 the composition is skewed to polar residues; it reads STKNGPSRSI. Residues 884 to 893 show a composition bias toward low complexity; sequence TTTTTTTDAT. A compositionally biased stretch (basic residues) spans 895-905; sequence PHHHHHHHRHR. The span at 916-927 shows a compositional bias: low complexity; sequence SKTTESSSSSSA. Positions 931–946 are enriched in basic residues; sequence KPKHKKGLLHKLKKKL.

Interacts with BTN2.

The protein localises to the cell membrane. May be involved in ion homeostasis together with BTN1 or BTN2. The protein is Increased sodium tolerance protein 2 (IST2) of Saccharomyces cerevisiae (strain ATCC 204508 / S288c) (Baker's yeast).